A 521-amino-acid polypeptide reads, in one-letter code: Outer membrane protein assembly factor BamB (521 aa).

The first 19 residues, 1-19 (MKKLFLVIVPLLLSLLATS), serve as a signal peptide directing secretion. C20 is lipidated: N-palmitoyl cysteine. C20 is lipidated: S-diacylglycerol cysteine. Residues 418 to 521 (KSGSIESSPK…IGDFSKGDSD (104 aa)) form a disordered region. Over residues 429–444 (LPDKKVDSNKTSKNDT) the composition is skewed to basic and acidic residues. Residues 445–477 (DSNPATTATSTKDIQNPANQEMINSTPVSNTST) are compositionally biased toward polar residues.

Belongs to the BamB family. Part of the Bam complex.

Its subcellular location is the cell outer membrane. Its function is as follows. Part of the outer membrane protein assembly complex, which is involved in assembly and insertion of beta-barrel proteins into the outer membrane. This Francisella salina protein is Outer membrane protein assembly factor BamB.